The primary structure comprises 314 residues: Dihydropteroate synthase (314 aa).

Residues T10–E294 form the Pterin-binding domain. N17 contacts Mg(2+). Residues T57, D91, N110, D201, K237, and R282–H284 each bind (7,8-dihydropterin-6-yl)methyl diphosphate.

The protein belongs to the DHPS family. In terms of assembly, homodimer or homotrimer. The cofactor is Mg(2+).

The catalysed reaction is (7,8-dihydropterin-6-yl)methyl diphosphate + 4-aminobenzoate = 7,8-dihydropteroate + diphosphate. The protein operates within cofactor biosynthesis; tetrahydrofolate biosynthesis; 7,8-dihydrofolate from 2-amino-4-hydroxy-6-hydroxymethyl-7,8-dihydropteridine diphosphate and 4-aminobenzoate: step 1/2. Functionally, catalyzes the condensation of para-aminobenzoate (pABA) with 6-hydroxymethyl-7,8-dihydropterin diphosphate (DHPt-PP) to form 7,8-dihydropteroate (H2Pte), the immediate precursor of folate derivatives. This chain is Dihydropteroate synthase (sulA), found in Streptococcus pneumoniae serotype 4 (strain ATCC BAA-334 / TIGR4).